Consider the following 712-residue polypeptide: Cyclomaltodextrin glucanotransferase (712 aa).

An N-terminal signal peptide occupies residues M1–A27. The segment at A28–P165 is A1. Residues D54, N56, N59, and N60 each coordinate Ca(2+). A disulfide bridge connects residues C70 and C77. Ca(2+) is bound by residues G78 and D80. Y127 to W128 contributes to the substrate binding site. N166 contacts Ca(2+). Residues N166–H229 form a b region. H167 contributes to the substrate binding site. Position 217 (I217) interacts with Ca(2+). N220–D223 serves as a coordination point for substrate. D226 serves as a coordination point for Ca(2+). The interval N230–Y433 is A2. Residue R254 participates in substrate binding. The active-site Nucleophile is D256. Residue K259 to H260 coordinates substrate. H260 provides a ligand contact to Ca(2+). The active-site Proton donor is E284. Substrate is bound by residues H354, D398, and R402. The tract at residues G434–D522 is c. Positions A523–L608 are d. In terms of domain architecture, IPT/TIG spans P526–E606. A CBM20 domain is found at V607–P712. Residues T609–P712 form an e region.

It belongs to the glycosyl hydrolase 13 family. Monomer. It depends on Ca(2+) as a cofactor.

It is found in the secreted. It catalyses the reaction Cyclizes part of a (1-&gt;4)-alpha-D-glucan chain by formation of a (1-&gt;4)-alpha-D-glucosidic bond.. In Bacillus sp. (strain 38-2), this protein is Cyclomaltodextrin glucanotransferase (cgt).